A 309-amino-acid chain; its full sequence is MGLGNESSLMDFILLGFSDHPRLEAVLFVFVLFFYLLTLVGNFTIIIISYLDPPLHTPMYFFLSNLSLLDICFTTSLAPQTLVNLQRPKKTITYGGCVAQLYISLALGSTECILLADMALDRYIAVCKPLHYVVIMNPRLCQQLASISWLSGLASSLIHATFTLQLPLCGNHRLDHFICEVPALLKLACVDTTVNELVLFVVSVLFVVIPPALISISYGFITQAVLRIKSVEARHKAFSTCSSHLTVVIIFYGTIIYVYLQPSDSYAQDQGKFISLFYTMVTPTLNPIIYTLRNKDMKEALRKLLSGKL.

The Extracellular portion of the chain corresponds to 1–25; the sequence is MGLGNESSLMDFILLGFSDHPRLEA. The N-linked (GlcNAc...) asparagine glycan is linked to asparagine 5. A helical transmembrane segment spans residues 26-49; sequence VLFVFVLFFYLLTLVGNFTIIIIS. Over 50 to 57 the chain is Cytoplasmic; sequence YLDPPLHT. Residues 58–79 form a helical membrane-spanning segment; that stretch reads PMYFFLSNLSLLDICFTTSLAP. The Extracellular portion of the chain corresponds to 80 to 100; sequence QTLVNLQRPKKTITYGGCVAQ. A disulfide bridge connects residues cysteine 97 and cysteine 189. The helical transmembrane segment at 101-120 threads the bilayer; the sequence is LYISLALGSTECILLADMAL. Residues 121–139 lie on the Cytoplasmic side of the membrane; it reads DRYIAVCKPLHYVVIMNPR. A helical transmembrane segment spans residues 140-158; the sequence is LCQQLASISWLSGLASSLI. Over 159-195 the chain is Extracellular; that stretch reads HATFTLQLPLCGNHRLDHFICEVPALLKLACVDTTVN. A helical transmembrane segment spans residues 196–219; it reads ELVLFVVSVLFVVIPPALISISYG. Topologically, residues 220-236 are cytoplasmic; it reads FITQAVLRIKSVEARHK. A helical transmembrane segment spans residues 237 to 259; it reads AFSTCSSHLTVVIIFYGTIIYVY. Residues 260–272 are Extracellular-facing; sequence LQPSDSYAQDQGK. The helical transmembrane segment at 273–292 threads the bilayer; the sequence is FISLFYTMVTPTLNPIIYTL. Topologically, residues 293-309 are cytoplasmic; it reads RNKDMKEALRKLLSGKL.

This sequence belongs to the G-protein coupled receptor 1 family.

The protein localises to the cell membrane. Odorant receptor. The protein is Olfactory receptor 2G3 (OR2G3) of Homo sapiens (Human).